We begin with the raw amino-acid sequence, 224 residues long: Large ribosomal subunit protein uL1 (224 aa).

This sequence belongs to the universal ribosomal protein uL1 family. In terms of assembly, part of the 50S ribosomal subunit.

Binds directly to 23S rRNA. The L1 stalk is quite mobile in the ribosome, and is involved in E site tRNA release. Its function is as follows. Protein L1 is also a translational repressor protein, it controls the translation of the L11 operon by binding to its mRNA. This Borrelia duttonii (strain Ly) protein is Large ribosomal subunit protein uL1.